A 137-amino-acid polypeptide reads, in one-letter code: Seminal plasma sperm motility inhibitor (137 aa).

The signal sequence occupies residues 1 to 21 (MKLGSAIPWALLLSTXTLVST). A disulfide bridge links Cys30 with Cys51. The region spanning 30 to 131 (CGGFLKNYSG…SSFNVYFYGI (102 aa)) is the CUB domain. Residue Asn36 is glycosylated (N-linked (GlcNAc...) asparagine).

It belongs to the spermadhesin family. In terms of tissue distribution, seminal plasma or sperm.

It localises to the secreted. Its function is as follows. Inhibitor of sperm motility. The protein is Seminal plasma sperm motility inhibitor (SPMI) of Sus scrofa (Pig).